Reading from the N-terminus, the 313-residue chain is L-lactate dehydrogenase 1 (313 aa).

V15, D36, R41, and Y66 together coordinate NAD(+). Substrate contacts are provided by residues Q83, R89, and 121-124 (NPVD). Residues 119–121 (ASN) and S144 contribute to the NAD(+) site. 149–152 (DTAR) serves as a coordination point for substrate. R154 and H169 together coordinate beta-D-fructose 1,6-bisphosphate. Catalysis depends on H176, which acts as the Proton acceptor. Phosphotyrosine is present on Y218. T227 lines the substrate pocket.

The protein belongs to the LDH/MDH superfamily. LDH family. Homotetramer.

It is found in the cytoplasm. It carries out the reaction (S)-lactate + NAD(+) = pyruvate + NADH + H(+). Its pathway is fermentation; pyruvate fermentation to lactate; (S)-lactate from pyruvate: step 1/1. Allosterically activated by fructose 1,6-bisphosphate (FBP). Functionally, catalyzes the conversion of lactate to pyruvate. The protein is L-lactate dehydrogenase 1 of Listeria monocytogenes serotype 4b (strain F2365).